The chain runs to 143 residues: Small ribosomal subunit protein uS12 (143 aa).

Residues 1 to 19 (MGKPRGIRTARKHVNHRRE) are compositionally biased toward basic residues. Residues 1 to 21 (MGKPRGIRTARKHVNHRREQR) form a disordered region. Hydroxyproline is present on proline 62.

The protein belongs to the universal ribosomal protein uS12 family. In terms of assembly, component of the 40S small ribosomal subunit.

The protein localises to the cytoplasm. It is found in the cytosol. It localises to the rough endoplasmic reticulum. The polypeptide is Small ribosomal subunit protein uS12 (RpS23) (Papilio dardanus (African swallowtail butterfly)).